A 234-amino-acid polypeptide reads, in one-letter code: Glucosamine-6-phosphate deaminase (234 aa).

D62 (proton acceptor; for enolization step) is an active-site residue. Catalysis depends on N128, which acts as the For ring-opening step. The Proton acceptor; for ring-opening step role is filled by H130. Residue E135 is the For ring-opening step of the active site.

The protein belongs to the glucosamine/galactosamine-6-phosphate isomerase family. NagB subfamily.

It catalyses the reaction alpha-D-glucosamine 6-phosphate + H2O = beta-D-fructose 6-phosphate + NH4(+). Its pathway is amino-sugar metabolism; N-acetylneuraminate degradation; D-fructose 6-phosphate from N-acetylneuraminate: step 5/5. In terms of biological role, catalyzes the reversible isomerization-deamination of glucosamine 6-phosphate (GlcN6P) to form fructose 6-phosphate (Fru6P) and ammonium ion. In Streptococcus equi subsp. zooepidemicus (strain MGCS10565), this protein is Glucosamine-6-phosphate deaminase.